Here is a 482-residue protein sequence, read N- to C-terminus: Pup--protein ligase (482 aa).

Mg(2+) is bound at residue Glu-16. Residue Arg-60 participates in ATP binding. Tyr-62 serves as a coordination point for Mg(2+). The active-site Proton acceptor is the Asp-64. Residue Glu-70 participates in Mg(2+) binding. ATP contacts are provided by Thr-73 and Trp-440.

The protein belongs to the Pup ligase/Pup deamidase family. Pup-conjugating enzyme subfamily.

It catalyses the reaction ATP + [prokaryotic ubiquitin-like protein]-L-glutamate + [protein]-L-lysine = ADP + phosphate + N(6)-([prokaryotic ubiquitin-like protein]-gamma-L-glutamyl)-[protein]-L-lysine.. The protein operates within protein degradation; proteasomal Pup-dependent pathway. It participates in protein modification; protein pupylation. Functionally, catalyzes the covalent attachment of the prokaryotic ubiquitin-like protein modifier Pup to the proteasomal substrate proteins, thereby targeting them for proteasomal degradation. This tagging system is termed pupylation. The ligation reaction involves the side-chain carboxylate of the C-terminal glutamate of Pup and the side-chain amino group of a substrate lysine. In Corynebacterium glutamicum (strain R), this protein is Pup--protein ligase.